Here is a 668-residue protein sequence, read N- to C-terminus: L-type lectin-domain containing receptor kinase I.7 (668 aa).

Positions 1-21 (MIRGLLLGIIWMIFCVCSSFQ) are cleaved as a signal peptide. The Extracellular segment spans residues 22-285 (QETPFVYNNF…SSTKKKSTSP (264 aa)). A legume-lectin like region spans residues 24 to 256 (TPFVYNNFGH…YQYILGWSFS (233 aa)). Residues Asn56, Asn125, Asn167, Asn201, and Asn223 are each glycosylated (N-linked (GlcNAc...) asparagine). The chain crosses the membrane as a helical span at residues 286 to 306 (VLSVLLGLIAFIVLGILVVAY). Topologically, residues 307–668 (LYRRNLYSEV…THSVLYGSGR (362 aa)) are cytoplasmic. Residues 341–620 (FNRSEFLGRG…LNGNLALPEF (280 aa)) form the Protein kinase domain. ATP is bound by residues 347–355 (LGRGGFGEV) and Lys372. The active-site Proton acceptor is Asp468.

In the C-terminal section; belongs to the protein kinase superfamily. Ser/Thr protein kinase family. This sequence in the N-terminal section; belongs to the leguminous lectin family.

The protein localises to the cell membrane. It catalyses the reaction L-seryl-[protein] + ATP = O-phospho-L-seryl-[protein] + ADP + H(+). The enzyme catalyses L-threonyl-[protein] + ATP = O-phospho-L-threonyl-[protein] + ADP + H(+). Involved in resistance response to the pathogenic oomycetes Phytophthora infestans and Phytophthora capsici. The sequence is that of L-type lectin-domain containing receptor kinase I.7 from Arabidopsis thaliana (Mouse-ear cress).